The chain runs to 537 residues: Di/tripeptide-binding protein 1 (537 aa).

A signal peptide spans 1–29 (MRRNAVIRSAIMPSLLGAALVAAVPQAFA).

This sequence belongs to the bacterial solute-binding protein 5 family. As to quaternary structure, the complex is composed of two ATP-binding proteins (DppD and DppF), two transmembrane proteins (DppB and DppC) and a solute-binding protein (DppA1). Five orthologous SBPs (DppA1-A5) are present in P.aeruginosa, which increases the substrate specificity of the DppBCDF transporter.

Part of the ABC transporter DppABCDF involved in the uptake of various di/tripeptides. Prefers dipeptides with acidic residues at the C-terminal end. Involved in the uptake of phaseolotoxin, a toxic tripeptide inhibiting the enzyme ornithine carbamoyltransferase. The polypeptide is Di/tripeptide-binding protein 1 (Pseudomonas aeruginosa (strain UCBPP-PA14)).